Here is a 465-residue protein sequence, read N- to C-terminus: Serine hydroxymethyltransferase (465 aa).

An N6-(pyridoxal phosphate)lysine modification is found at Lys-241.

It belongs to the SHMT family. Homotetramer. The cofactor is pyridoxal 5'-phosphate. Highest expression in the ovary and testis. 6- to 7-fold lower expression in hemocyte, silk gland, midgut and fat body.

It carries out the reaction (6R)-5,10-methylene-5,6,7,8-tetrahydrofolate + glycine + H2O = (6S)-5,6,7,8-tetrahydrofolate + L-serine. It participates in one-carbon metabolism; tetrahydrofolate interconversion. Interconversion of serine and glycine. In Bombyx mori (Silk moth), this protein is Serine hydroxymethyltransferase (692975).